Reading from the N-terminus, the 656-residue chain is uncharacterized protein (656 aa).

The interval 623-656 is disordered; that stretch reads EIDIPGTPASIDPEWSRPPGSITDDHVFDAPLHR. Over residues 645-656 the composition is skewed to basic and acidic residues; it reads TDDHVFDAPLHR.

This is an uncharacterized protein from Mycobacterium tuberculosis (strain CDC 1551 / Oshkosh).